The following is a 95-amino-acid chain: Integration host factor subunit beta (95 aa).

This sequence belongs to the bacterial histone-like protein family. Heterodimer of an alpha and a beta chain.

Functionally, this protein is one of the two subunits of integration host factor, a specific DNA-binding protein that functions in genetic recombination as well as in transcriptional and translational control. This is Integration host factor subunit beta from Klebsiella pneumoniae (strain 342).